The chain runs to 163 residues: Ribonuclease P protein subunit p25-like protein (163 aa).

Disordered stretches follow at residues 1–24 (MEQY…LPPD) and 126–163 (LDPS…DTRS). Residues 153–163 (RPRRRARDTRS) show a composition bias toward basic residues.

The protein belongs to the histone-like Alba family.

The protein localises to the nucleus. May be a component of ribonuclease P or MRP. This is Ribonuclease P protein subunit p25-like protein (Rpp25l) from Mus musculus (Mouse).